We begin with the raw amino-acid sequence, 438 residues long: Anthranilate synthase component 1 (438 aa).

Residues Ser-45 and 220 to 222 (PYL) contribute to the L-tryptophan site. 255–256 (GT) lines the chorismate pocket. Glu-282 contacts Mg(2+). Residues Tyr-370, Arg-389, 405-407 (GAG), and Gly-407 contribute to the chorismate site. A Mg(2+)-binding site is contributed by Glu-420.

The protein belongs to the anthranilate synthase component I family. Heterotetramer consisting of two non-identical subunits: a beta subunit (TrpG) and a large alpha subunit (TrpE). Requires Mg(2+) as cofactor.

The enzyme catalyses chorismate + L-glutamine = anthranilate + pyruvate + L-glutamate + H(+). Its pathway is amino-acid biosynthesis; L-tryptophan biosynthesis; L-tryptophan from chorismate: step 1/5. Its activity is regulated as follows. Feedback inhibited by tryptophan. Its function is as follows. Part of a heterotetrameric complex that catalyzes the two-step biosynthesis of anthranilate, an intermediate in the biosynthesis of L-tryptophan. In the first step, the glutamine-binding beta subunit (TrpG) of anthranilate synthase (AS) provides the glutamine amidotransferase activity which generates ammonia as a substrate that, along with chorismate, is used in the second step, catalyzed by the large alpha subunit of AS (TrpE) to produce anthranilate. In the absence of TrpG, TrpE can synthesize anthranilate directly from chorismate and high concentrations of ammonia. The protein is Anthranilate synthase component 1 (trpE) of Aeropyrum pernix (strain ATCC 700893 / DSM 11879 / JCM 9820 / NBRC 100138 / K1).